A 514-amino-acid polypeptide reads, in one-letter code: MTIESGRIRIFDTTLRDGEQSPGATMNLQEKIRLARQLETLGVDIMEAGFPASSQGDFEAVQAIARAVKGVEVAGLCRAMPADIDRAWEAVKVAENPRIHTFLATSPVHMQYKLRKEPDQVVEMAVAAVRHAAKYTSNVEFSAEDASRSNPDFLVRVFEAVINAGATTINVPDTVGYAQPEEFGRLIRYVIENTPNSHKAVFSVHCHNDLGMGVANTLAALKAGARQAEVTISGIGERAGNASLEEIVMALHTRRDFYQLDCGVVTEQLFPTCRLLSMIIGQPIPPNKAIVGANAFAHESGIHQDGMLKNRETYEIMTPESIGKTKTDLVIGKHSGRNAVKNKLDELGYRLEEAQLVTVFEAVKKLADKKKQIYDEDIEALVLEEVYRLPDLYRLVNLSVQCSDTGMPPTAAVVMDVMGEVKRAAGFGVGPIDAVFNVIGEIVGRAPVLERYSVTAITGGTDAQGEVTVRLRQNGSSAVGRGSDPDIILASARAYVNALNRLAKKEEEQEKEGI.

Residues 8-270 (IRIFDTTLRD…DCGVVTEQLF (263 aa)) form the Pyruvate carboxyltransferase domain. Residues Asp17, His205, His207, and Asn241 each contribute to the Mn(2+) site. A regulatory domain region spans residues 394–514 (RLVNLSVQCS…KEEEQEKEGI (121 aa)).

Belongs to the alpha-IPM synthase/homocitrate synthase family. LeuA type 1 subfamily. In terms of assembly, homodimer. Requires Mn(2+) as cofactor.

The protein localises to the cytoplasm. It carries out the reaction 3-methyl-2-oxobutanoate + acetyl-CoA + H2O = (2S)-2-isopropylmalate + CoA + H(+). It functions in the pathway amino-acid biosynthesis; L-leucine biosynthesis; L-leucine from 3-methyl-2-oxobutanoate: step 1/4. Functionally, catalyzes the condensation of the acetyl group of acetyl-CoA with 3-methyl-2-oxobutanoate (2-ketoisovalerate) to form 3-carboxy-3-hydroxy-4-methylpentanoate (2-isopropylmalate). The sequence is that of 2-isopropylmalate synthase from Nitratidesulfovibrio vulgaris (strain DSM 19637 / Miyazaki F) (Desulfovibrio vulgaris).